The sequence spans 65 residues: Large ribosomal subunit protein bL28 (65 aa).

Belongs to the bacterial ribosomal protein bL28 family.

This Bifidobacterium animalis subsp. lactis (strain AD011) protein is Large ribosomal subunit protein bL28.